A 767-amino-acid chain; its full sequence is Cadherin-5 (767 aa).

A signal peptide spans 1 to 29 (MMKQCARRQMTEPVFRVAVLLALCSLSIG). Residues 30–51 (VDVHQAQKTPSISSAALQRHKR) constitute a propeptide that is removed on maturation. Residues 30–593 (VDVHQAQKTP…SYARTGMSVS (564 aa)) are Extracellular-facing. Ca(2+)-binding residues include Glu62, Glu63, Asp113, and Glu115. 5 consecutive Cadherin domains span residues 86 to 155 (RYIL…IPVF), 155 to 261 (FDSD…IATF), 262 to 373 (KKER…PPIF), 374 to 475 (NQTE…APEL), and 475 to 581 (LTNG…RVEY). An N-linked (GlcNAc...) asparagine glycan is attached at Asn121. Residues Asp147, Ile148, Asn149, Asp150, Asn151, Asp180, and Asp182 each coordinate Ca(2+). Asn197 is a glycosylation site (N-linked (GlcNAc...) asparagine). Ca(2+) is bound at residue Asp233. Asn374, Asn477, and Asn518 each carry an N-linked (GlcNAc...) asparagine glycan. The chain crosses the membrane as a helical span at residues 594–614 (ALLAILLCIITILVIVILIVL). The Cytoplasmic portion of the chain corresponds to 615–767 (RRRYQKEVLV…VDGSDSDSSY (153 aa)).

The protein localises to the cell membrane. Its subcellular location is the cell junction. It is found in the adherens junction. Cadherins are calcium-dependent cell adhesion proteins. They preferentially interact with themselves in a homophilic manner in connecting cells; cadherins may thus contribute to the sorting of heterogeneous cell types. Required for embryonic cardiac looping and heart chamber development, via promotion of cell-cell junction formation and subsequent attachment between the endothelial and myocardial layers of the heart. Required for the directional migration and delamination of endothelial cell monolayers, by which common cardinal veins form via the lumen ensheathment mechanism of vessel development as they migrate and connect with the heart inflow tract. Required for the formation of filopodia extensions (sprouts) at the initiation of intersegmental vessel development, by acting (via its C-terminus) to facilitate anchoring of the actin cytoskeleton to cell junctions in endothelial cells. Then positively regulates dorsal migration of stalk cells and sprout outgrowth towards the dorsal longitudinal anastomotic vessels (DLAV) via endothelial cell elongation. Following contact with the DLAV, required for intersegmental vessel lumen formation, potentially via facilitating the formation and/or extension of endothelial cell tight junctions that are required during tubulogenesis. The chain is Cadherin-5 from Danio rerio (Zebrafish).